The chain runs to 93 residues: Acylphosphatase (93 aa).

Residues 5-93 (AKQIVVRGRV…PNFRGFQVTG (89 aa)) form the Acylphosphatase-like domain. Active-site residues include Arg-20 and Asn-38.

The protein belongs to the acylphosphatase family.

It carries out the reaction an acyl phosphate + H2O = a carboxylate + phosphate + H(+). The chain is Acylphosphatase (acyP) from Lacticaseibacillus paracasei (strain ATCC 334 / BCRC 17002 / CCUG 31169 / CIP 107868 / KCTC 3260 / NRRL B-441) (Lactobacillus paracasei).